The chain runs to 505 residues: Alkylglycerol monooxygenase (505 aa).

Transmembrane regions (helical) follow at residues Val-56–His-76 and Ala-104–Trp-124. In terms of domain architecture, Fatty acid hydroxylase spans Trp-130–Thr-262. The Histidine box-1 motif lies at His-145 to His-149. The Histidine box-2 signature appears at His-158–His-162. Residues His-234 to His-238 carry the Histidine box-3 motif. 4 helical membrane-spanning segments follow: residues Ile-366–Phe-386, Leu-396–Phe-416, Cys-430–His-450, and Leu-452–Glu-472.

It belongs to the sterol desaturase family. TMEM195 subfamily. It depends on Fe cation as a cofactor.

It is found in the endoplasmic reticulum membrane. The catalysed reaction is 1-O-(1,2-saturated-alkyl)-sn-glycerol + (6R)-L-erythro-5,6,7,8-tetrahydrobiopterin + O2 = a 1-(1-hydroxyalkyl)-sn-glycerol + (6R)-L-erythro-6,7-dihydrobiopterin + H2O. Its function is as follows. Glyceryl-ether monooxygenase that cleaves the O-alkyl bond of ether lipids. This Caenorhabditis elegans protein is Alkylglycerol monooxygenase.